We begin with the raw amino-acid sequence, 246 residues long: MALTLYPAIDLKDGACVRLRRGEMDQATVYAEDPAAQARTFEAAGFTALHVVDLNGAFAGRPVNGEAVRAILTAVAMPVQLGGGIRDMAGIAAWIELGISRVILGSAAVKNPALVREAAAAFPGRIIVGIDARDGMVATEGWAETSSLPATEMAMRLQDAGIAAIIHTDIARDGMLQGLNLDATEALAAAIAIPVIASGGVAGIEDIRNLRAAAARTPNLAGTIIGRALYDGRIDPQAALAEAAAC.

Asp-10 (proton acceptor) is an active-site residue. Asp-131 acts as the Proton donor in catalysis.

This sequence belongs to the HisA/HisF family.

It localises to the cytoplasm. The enzyme catalyses 1-(5-phospho-beta-D-ribosyl)-5-[(5-phospho-beta-D-ribosylamino)methylideneamino]imidazole-4-carboxamide = 5-[(5-phospho-1-deoxy-D-ribulos-1-ylimino)methylamino]-1-(5-phospho-beta-D-ribosyl)imidazole-4-carboxamide. It functions in the pathway amino-acid biosynthesis; L-histidine biosynthesis; L-histidine from 5-phospho-alpha-D-ribose 1-diphosphate: step 4/9. This chain is 1-(5-phosphoribosyl)-5-[(5-phosphoribosylamino)methylideneamino] imidazole-4-carboxamide isomerase, found in Acidiphilium cryptum (strain JF-5).